The chain runs to 726 residues: Catalase-peroxidase (726 aa).

The interval 1-33 is disordered; the sequence is MSTTDDTHNTLSTGKCPFHQGGHDRSAGAGTAS. Residues 105–226 constitute a cross-link (tryptophyl-tyrosyl-methioninium (Trp-Tyr) (with M-252)); that stretch reads WHGAGTYRSI…LGATEMGLIY (122 aa). Residue H106 is the Proton acceptor of the active site. A cross-link (tryptophyl-tyrosyl-methioninium (Tyr-Met) (with W-105)) is located at residues 226 to 252; sequence YVNPEGPDHSGEPLSAAAAIRATFGNM. Residue H267 participates in heme b binding.

Belongs to the peroxidase family. Peroxidase/catalase subfamily. As to quaternary structure, homodimer or homotetramer. The cofactor is heme b. In terms of processing, formation of the three residue Trp-Tyr-Met cross-link is important for the catalase, but not the peroxidase activity of the enzyme.

It catalyses the reaction H2O2 + AH2 = A + 2 H2O. The catalysed reaction is 2 H2O2 = O2 + 2 H2O. Its function is as follows. Bifunctional enzyme with both catalase and broad-spectrum peroxidase activity. The polypeptide is Catalase-peroxidase (Salmonella paratyphi B (strain ATCC BAA-1250 / SPB7)).